The sequence spans 418 residues: MTYLEIEGTNHLSGNVTISGAKNAALPLIVSSILAKNEVKINNVPNVADIKTLISLLENLGAKVNFQNNSALLNTNTLNQTIAKYDIVRKMRASILTLGPLLARFGHCEVSLPGGCAIGQRPIDLHLLALEKMGANIQIKQGYVVASGNLKGNEILFDKITVTGSENIIMAAALAKGKTKLLNVAKEPEVVQLCEVLKDAGLEIKGIGTDELEIYGTDGELLEFKEFSVIPDRIEAGTYLCAGAITNSKITLDKVNATHLSAVLAKLHQMGFETLIAEDSITLLPAKEIKPVEIMTSEYPGFPTDMQAQFMALALKANGTSIIDERLFENRFMHVSELLRMGADIKLNGHIATIVGGKELNAADVMATDLRASSALILAALAAKGTSKVHRIYHLDRGYENLEEKFKGLGAKITRLEE.

A phosphoenolpyruvate-binding site is contributed by 22 to 23 (KN). A UDP-N-acetyl-alpha-D-glucosamine-binding site is contributed by R92. C116 serves as the catalytic Proton donor. Residue C116 is modified to 2-(S-cysteinyl)pyruvic acid O-phosphothioketal. UDP-N-acetyl-alpha-D-glucosamine is bound by residues 121 to 125 (RPIDL), D305, and L327.

The protein belongs to the EPSP synthase family. MurA subfamily.

Its subcellular location is the cytoplasm. The catalysed reaction is phosphoenolpyruvate + UDP-N-acetyl-alpha-D-glucosamine = UDP-N-acetyl-3-O-(1-carboxyvinyl)-alpha-D-glucosamine + phosphate. The protein operates within cell wall biogenesis; peptidoglycan biosynthesis. In terms of biological role, cell wall formation. Adds enolpyruvyl to UDP-N-acetylglucosamine. This Campylobacter jejuni subsp. jejuni serotype O:6 (strain 81116 / NCTC 11828) protein is UDP-N-acetylglucosamine 1-carboxyvinyltransferase.